A 283-amino-acid chain; its full sequence is Phospholipase C (283 aa).

A signal peptide spans 1 to 24; it reads MKKKVLALGAAITLVAPLQSVAFA. Residues 25-38 constitute a propeptide that is removed on maturation; the sequence is HENDGGQRFGVIPR. Residues Trp-39, His-52, Asp-93, His-107, His-156, Asp-160, His-166, His-180, and Glu-184 each contribute to the Zn(2+) site. Positions 39–283 constitute a Zn-dependent PLC domain; that stretch reads WSAEDKHKEG…QLWFDTYGNR (245 aa).

Belongs to the bacterial zinc-metallophospholipase C family. Monomer. It depends on Zn(2+) as a cofactor.

It carries out the reaction a 1,2-diacyl-sn-glycero-3-phosphocholine + H2O = phosphocholine + a 1,2-diacyl-sn-glycerol + H(+). Functionally, required, with sphingomyelinase, to effect target cell lysis (hemolysis). The chain is Phospholipase C (cerA) from Bacillus cereus.